Consider the following 103-residue polypeptide: Large ribosomal subunit protein bL21 (103 aa).

The protein belongs to the bacterial ribosomal protein bL21 family. As to quaternary structure, part of the 50S ribosomal subunit. Contacts protein L20.

This protein binds to 23S rRNA in the presence of protein L20. This chain is Large ribosomal subunit protein bL21, found in Burkholderia mallei (strain NCTC 10247).